A 246-amino-acid polypeptide reads, in one-letter code: Bis(5'-nucleosyl)-tetraphosphatase PrpE [asymmetrical] (246 aa).

Belongs to the PrpE family. Ni(2+) serves as cofactor.

The enzyme catalyses P(1),P(4)-bis(5'-guanosyl) tetraphosphate + H2O = GMP + GTP + 2 H(+). Functionally, asymmetrically hydrolyzes Ap4p to yield AMP and ATP. This is Bis(5'-nucleosyl)-tetraphosphatase PrpE [asymmetrical] from Bacillus cereus (strain AH820).